The sequence spans 513 residues: Butyrophilin subfamily 3 member A1 (513 aa).

Positions 1 to 29 (MKMASFLAFLLLNFRVCLLLLQLLMPHSA) are cleaved as a signal peptide. 2 consecutive Ig-like V-type domains span residues 30–139 (QFSV…KALV) and 145–236 (ALGS…ASIS). The Extracellular segment spans residues 30–254 (QFSVLGPSGP…AQRWIAALAG (225 aa)). Cystine bridges form between cysteine 52/cysteine 126 and cysteine 166/cysteine 220. N-linked (GlcNAc...) asparagine glycosylation is present at asparagine 115. The chain crosses the membrane as a helical span at residues 255 to 271 (TLPVLLLLLGGAGYFLW). At 272–513 (QQQEEKKTQF…EPTALTICPA (242 aa)) the chain is on the cytoplasmic side. A B30.2/SPRY domain is found at 322-513 (RGERHSAYNE…EPTALTICPA (192 aa)).

The protein belongs to the immunoglobulin superfamily. BTN/MOG family. In terms of assembly, homodimer. Post-translationally, N-glycosylated. Detected on T-cells, natural killer cells, dendritic cells and macrophages (at protein level). Ubiquitous. Highly expressed in heart, pancreas and lung, Moderately expressed in placenta, liver and muscle.

Its subcellular location is the cell membrane. Functionally, plays a role in T-cell activation and in the adaptive immune response. Regulates the proliferation of activated T-cells. Regulates the release of cytokines and IFNG by activated T-cells. Mediates the response of T-cells toward infected and transformed cells that are characterized by high levels of phosphorylated metabolites, such as isopentenyl pyrophosphate. The chain is Butyrophilin subfamily 3 member A1 (BTN3A1) from Homo sapiens (Human).